The chain runs to 198 residues: Imidazoleglycerol-phosphate dehydratase (198 aa).

It belongs to the imidazoleglycerol-phosphate dehydratase family.

The protein resides in the cytoplasm. The enzyme catalyses D-erythro-1-(imidazol-4-yl)glycerol 3-phosphate = 3-(imidazol-4-yl)-2-oxopropyl phosphate + H2O. The protein operates within amino-acid biosynthesis; L-histidine biosynthesis; L-histidine from 5-phospho-alpha-D-ribose 1-diphosphate: step 6/9. The protein is Imidazoleglycerol-phosphate dehydratase of Nitratidesulfovibrio vulgaris (strain DP4) (Desulfovibrio vulgaris).